We begin with the raw amino-acid sequence, 145 residues long: Peptide methionine sulfoxide reductase MsrB (145 aa).

The MsrB domain maps to 4–127 (KEELRQRIGD…NSAALKFIPY (124 aa)). The active-site Nucleophile is cysteine 116.

This sequence belongs to the MsrB Met sulfoxide reductase family.

The catalysed reaction is L-methionyl-[protein] + [thioredoxin]-disulfide + H2O = L-methionyl-(R)-S-oxide-[protein] + [thioredoxin]-dithiol. This chain is Peptide methionine sulfoxide reductase MsrB, found in Streptococcus equi subsp. zooepidemicus (strain H70).